The chain runs to 87 residues: UPF0248 protein TSIB_1445 (87 aa).

It belongs to the UPF0248 family.

The sequence is that of UPF0248 protein TSIB_1445 from Thermococcus sibiricus (strain DSM 12597 / MM 739).